A 567-amino-acid polypeptide reads, in one-letter code: Geranylgeranyl transferase type-2 subunit alpha (567 aa).

PFTA repeat units lie at residues 44-78 (LDES…QLET), 88-122 (LVKA…RLPE), 124-158 (NWTR…QAAV), 159-193 (PPAE…QLHP), 207-241 (VLLK…RADP), and 363-397 (VLQS…ALDP). Residue S98 is modified to Phosphoserine. LRR repeat units lie at residues 442–463 (EVRV…EQLL), 464–486 (LVTH…AALR), 487–508 (CLEV…TNLP), 509–530 (RLQE…QPLA), and 534–555 (RLVL…LEQL).

The protein belongs to the protein prenyltransferase subunit alpha family. As to quaternary structure, heterotrimer composed of RABGGTA, RABGGTB and CHM; within this trimer, RABGGTA and RABGGTB form the catalytic component B, while CHM (component A) mediates peptide substrate binding. The Rab GGTase dimer (RGGT) interacts with CHM (component A) prior to Rab protein binding; the association is stabilized by geranylgeranyl pyrophosphate (GGpp). The CHM:RGGT:Rab complex is destabilized by GGpp. Interacts with non-phosphorylated form of RAB8A; phosphorylation of RAB8A at 'Thr-72' disrupts this interaction.

It carries out the reaction geranylgeranyl diphosphate + L-cysteinyl-[protein] = S-geranylgeranyl-L-cysteinyl-[protein] + diphosphate. Its activity is regulated as follows. The enzymatic reaction requires the aid of a Rab escort protein (also called component A), such as CHM. Functionally, catalyzes the transfer of a geranylgeranyl moiety from geranylgeranyl diphosphate to both cysteines of Rab proteins with the C-terminal sequence -XXCC, -XCXC and -CCXX, such as RAB1A, RAB3A, RAB5A and RAB7A. This Pongo abelii (Sumatran orangutan) protein is Geranylgeranyl transferase type-2 subunit alpha (RABGGTA).